We begin with the raw amino-acid sequence, 186 residues long: Translation initiation factor IF-3 (186 aa).

It belongs to the IF-3 family. In terms of assembly, monomer.

It localises to the cytoplasm. Functionally, IF-3 binds to the 30S ribosomal subunit and shifts the equilibrium between 70S ribosomes and their 50S and 30S subunits in favor of the free subunits, thus enhancing the availability of 30S subunits on which protein synthesis initiation begins. The polypeptide is Translation initiation factor IF-3 (Borreliella afzelii (strain PKo) (Borrelia afzelii)).